Consider the following 176-residue polypeptide: Tubulin polymerization-promoting protein family member 3 (176 aa).

An N-acetylalanine modification is found at A2.

The protein belongs to the TPPP family.

The protein resides in the cytoplasm. It is found in the cytoskeleton. Its function is as follows. Regulator of microtubule dynamic that has microtubule bundling activity. Required for embryo implantation; possibly by regulating beta-catenin. Also required for decidualization via regulation of beta-catenin. In Bos taurus (Bovine), this protein is Tubulin polymerization-promoting protein family member 3 (TPPP3).